The following is a 267-amino-acid chain: Shikimate dehydrogenase (NADP(+)) (267 aa).

Residues 14–16 and threonine 61 each bind shikimate; that span reads SLS. The active-site Proton acceptor is lysine 65. 2 residues coordinate shikimate: asparagine 86 and aspartate 101. Residues 126 to 130, 150 to 155, and leucine 213 contribute to the NADP(+) site; these read GAGGA and NRTHSK. Residue tyrosine 215 coordinates shikimate. Glycine 236 serves as a coordination point for NADP(+).

Belongs to the shikimate dehydrogenase family. As to quaternary structure, homodimer.

The enzyme catalyses shikimate + NADP(+) = 3-dehydroshikimate + NADPH + H(+). It participates in metabolic intermediate biosynthesis; chorismate biosynthesis; chorismate from D-erythrose 4-phosphate and phosphoenolpyruvate: step 4/7. In terms of biological role, involved in the biosynthesis of the chorismate, which leads to the biosynthesis of aromatic amino acids. Catalyzes the reversible NADPH linked reduction of 3-dehydroshikimate (DHSA) to yield shikimate (SA). The chain is Shikimate dehydrogenase (NADP(+)) from Vesicomyosocius okutanii subsp. Calyptogena okutanii (strain HA).